Reading from the N-terminus, the 88-residue chain is Large ribosomal subunit protein eL31 (88 aa).

It belongs to the eukaryotic ribosomal protein eL31 family.

The protein is Large ribosomal subunit protein eL31 (rpl31e) of Archaeoglobus fulgidus (strain ATCC 49558 / DSM 4304 / JCM 9628 / NBRC 100126 / VC-16).